We begin with the raw amino-acid sequence, 229 residues long: DNA repair protein RecO (229 aa).

Belongs to the RecO family.

In terms of biological role, involved in DNA repair and RecF pathway recombination. The polypeptide is DNA repair protein RecO (Pseudomonas fluorescens (strain ATCC BAA-477 / NRRL B-23932 / Pf-5)).